The sequence spans 383 residues: S-adenosylmethionine synthase (383 aa).

Residue H15 coordinates ATP. D17 is a binding site for Mg(2+). E43 is a K(+) binding site. L-methionine contacts are provided by E56 and Q99. A flexible loop region spans residues 99–109; that stretch reads QSQDINQGVDR. ATP-binding positions include 164 to 166, 230 to 231, D239, 245 to 246, A262, and K266; these read DAK, RF, and RK. An L-methionine-binding site is contributed by D239. Residue K270 coordinates L-methionine.

Belongs to the AdoMet synthase family. Homotetramer; dimer of dimers. The cofactor is Mg(2+). K(+) is required as a cofactor.

The protein localises to the cytoplasm. It carries out the reaction L-methionine + ATP + H2O = S-adenosyl-L-methionine + phosphate + diphosphate. The protein operates within amino-acid biosynthesis; S-adenosyl-L-methionine biosynthesis; S-adenosyl-L-methionine from L-methionine: step 1/1. Catalyzes the formation of S-adenosylmethionine (AdoMet) from methionine and ATP. The overall synthetic reaction is composed of two sequential steps, AdoMet formation and the subsequent tripolyphosphate hydrolysis which occurs prior to release of AdoMet from the enzyme. The sequence is that of S-adenosylmethionine synthase from Actinobacillus succinogenes (strain ATCC 55618 / DSM 22257 / CCUG 43843 / 130Z).